Consider the following 375-residue polypeptide: MRQMAPLIMLAAGGTGGHLFPAEALGVALMKRGLRVRLVTDMRALRYSGLFSRDMVDVVPSETLRGRSPVALARTALKLGTGTLMALSLMLRLKPAAVIGFGGYPTLPPLLAARMFGIPTLVHDSNAVMGRANRFLSHKVTAIATSLPGVLDRDPALAAKTTTTGTPMRPAILAAAAVPFAAPEAEGPLRLLVVGGSQGARVMADVVPGAIEKLGPALWPRLVVVQQVRDEDMARVRAVYDRLKLNFELEPFFNDLPARLAASHLVISRSGAGTVAELAAIGRPSILVPLPGALDQDQFANAGVLSQAGGAIRIAQDDFTPTRLAQEISALAADPARLVAMAAAGRGAGRLDAAERLADLVVKVAGISSKTSQLQ.

UDP-N-acetyl-alpha-D-glucosamine contacts are provided by residues 15 to 17 (TGG), N126, R169, S197, and Q298.

This sequence belongs to the glycosyltransferase 28 family. MurG subfamily.

It localises to the cell inner membrane. The catalysed reaction is di-trans,octa-cis-undecaprenyl diphospho-N-acetyl-alpha-D-muramoyl-L-alanyl-D-glutamyl-meso-2,6-diaminopimeloyl-D-alanyl-D-alanine + UDP-N-acetyl-alpha-D-glucosamine = di-trans,octa-cis-undecaprenyl diphospho-[N-acetyl-alpha-D-glucosaminyl-(1-&gt;4)]-N-acetyl-alpha-D-muramoyl-L-alanyl-D-glutamyl-meso-2,6-diaminopimeloyl-D-alanyl-D-alanine + UDP + H(+). The protein operates within cell wall biogenesis; peptidoglycan biosynthesis. In terms of biological role, cell wall formation. Catalyzes the transfer of a GlcNAc subunit on undecaprenyl-pyrophosphoryl-MurNAc-pentapeptide (lipid intermediate I) to form undecaprenyl-pyrophosphoryl-MurNAc-(pentapeptide)GlcNAc (lipid intermediate II). This Rhodopseudomonas palustris (strain BisB18) protein is UDP-N-acetylglucosamine--N-acetylmuramyl-(pentapeptide) pyrophosphoryl-undecaprenol N-acetylglucosamine transferase.